Consider the following 187-residue polypeptide: Peptidyl-tRNA hydrolase (187 aa).

F14 is a tRNA binding site. H19 serves as the catalytic Proton acceptor. Y64, N66, and N112 together coordinate tRNA.

The protein belongs to the PTH family. Monomer.

The protein localises to the cytoplasm. The enzyme catalyses an N-acyl-L-alpha-aminoacyl-tRNA + H2O = an N-acyl-L-amino acid + a tRNA + H(+). Hydrolyzes ribosome-free peptidyl-tRNAs (with 1 or more amino acids incorporated), which drop off the ribosome during protein synthesis, or as a result of ribosome stalling. In terms of biological role, catalyzes the release of premature peptidyl moieties from peptidyl-tRNA molecules trapped in stalled 50S ribosomal subunits, and thus maintains levels of free tRNAs and 50S ribosomes. This Oceanobacillus iheyensis (strain DSM 14371 / CIP 107618 / JCM 11309 / KCTC 3954 / HTE831) protein is Peptidyl-tRNA hydrolase.